The sequence spans 572 residues: Urease subunit alpha (572 aa).

The Urease domain occupies 132–572 (GGFDSHIHFI…LPMAQRYFMY (441 aa)). Ni(2+)-binding residues include His-137, His-139, and Lys-220. N6-carboxylysine is present on Lys-220. His-222 is a substrate binding site. 2 residues coordinate Ni(2+): His-249 and His-275. The active-site Proton donor is the His-323. Residue Asp-363 coordinates Ni(2+).

The protein belongs to the metallo-dependent hydrolases superfamily. Urease alpha subunit family. As to quaternary structure, heterotrimer of UreA (gamma), UreB (beta) and UreC (alpha) subunits. Three heterotrimers associate to form the active enzyme. The cofactor is Ni cation. In terms of processing, carboxylation allows a single lysine to coordinate two nickel ions.

It is found in the cytoplasm. It carries out the reaction urea + 2 H2O + H(+) = hydrogencarbonate + 2 NH4(+). It functions in the pathway nitrogen metabolism; urea degradation; CO(2) and NH(3) from urea (urease route): step 1/1. This is Urease subunit alpha from Bradyrhizobium diazoefficiens (strain JCM 10833 / BCRC 13528 / IAM 13628 / NBRC 14792 / USDA 110).